The sequence spans 358 residues: Transcriptional repressor protein KorB (358 aa).

Over residues 1 to 42 (MTAAQAKTTKKNTAAAAQEAAGAAQPSGLGLDSIGDLSSLLD) the composition is skewed to low complexity. Disordered regions lie at residues 1 to 79 (MTAA…FSPE) and 256 to 305 (DPNT…DKLK). Acidic residues predominate over residues 275-285 (AGDGQDGEDGD). Over residues 286–305 (QDGKDAKEKGAKEPDPDKLK) the composition is skewed to basic and acidic residues.

Belongs to the ParB family.

Its function is as follows. In conjunction with KorA, inhibits the transcription of the kilA, trfA and korAB operons. Is also involved in the negative control of the kilB operon. The polypeptide is Transcriptional repressor protein KorB (korB) (Escherichia coli).